We begin with the raw amino-acid sequence, 102 residues long: Citrate lyase acyl carrier protein (102 aa).

O-(phosphoribosyl dephospho-coenzyme A)serine is present on S14.

This sequence belongs to the CitD family. As to quaternary structure, oligomer with a subunit composition of (alpha,beta,gamma)6.

The protein resides in the cytoplasm. Functionally, covalent carrier of the coenzyme of citrate lyase. This is Citrate lyase acyl carrier protein from Streptococcus pyogenes serotype M2 (strain MGAS10270).